The primary structure comprises 265 residues: Nitrogenase vanadium-iron protein alpha chain (265 aa).

Positions 17 and 80 each coordinate [8Fe-7S] cluster. Cys-199 is a binding site for [7Fe-V-9S-C-homocitryl] cluster.

The protein belongs to the NifD/NifK/NifE/NifN family. Hexamer of two alpha, two beta, and two delta chains. It depends on [8Fe-7S] cluster as a cofactor. [7Fe-V-9S-C-homocitryl] cluster is required as a cofactor.

The enzyme catalyses N2 + 8 reduced [2Fe-2S]-[ferredoxin] + 16 ATP + 16 H2O = H2 + 8 oxidized [2Fe-2S]-[ferredoxin] + 2 NH4(+) + 16 ADP + 16 phosphate + 6 H(+). In terms of biological role, this vanadium-iron protein is part of the nitrogenase complex that catalyzes the key enzymatic reactions in nitrogen fixation. This is Nitrogenase vanadium-iron protein alpha chain (vnfD) from Azorhizophilus paspali (Azotobacter paspali).